The sequence spans 84 residues: Exodeoxyribonuclease 7 small subunit (84 aa).

Belongs to the XseB family. Heterooligomer composed of large and small subunits.

The protein localises to the cytoplasm. It carries out the reaction Exonucleolytic cleavage in either 5'- to 3'- or 3'- to 5'-direction to yield nucleoside 5'-phosphates.. Its function is as follows. Bidirectionally degrades single-stranded DNA into large acid-insoluble oligonucleotides, which are then degraded further into small acid-soluble oligonucleotides. In Bartonella bacilliformis (strain ATCC 35685 / KC583 / Herrer 020/F12,63), this protein is Exodeoxyribonuclease 7 small subunit.